The following is a 289-amino-acid chain: Diaminopimelate epimerase (289 aa).

Asn-15 and Asn-76 together coordinate substrate. Catalysis depends on Cys-85, which acts as the Proton donor. Residues 86–87, Asn-158, Asn-191, and 209–210 each bind substrate; these read GN and ER. Cys-218 functions as the Proton acceptor in the catalytic mechanism. 219 to 220 is a substrate binding site; that stretch reads GT.

Belongs to the diaminopimelate epimerase family. As to quaternary structure, homodimer.

Its subcellular location is the cytoplasm. The catalysed reaction is (2S,6S)-2,6-diaminopimelate = meso-2,6-diaminopimelate. It functions in the pathway amino-acid biosynthesis; L-lysine biosynthesis via DAP pathway; DL-2,6-diaminopimelate from LL-2,6-diaminopimelate: step 1/1. Its function is as follows. Catalyzes the stereoinversion of LL-2,6-diaminopimelate (L,L-DAP) to meso-diaminopimelate (meso-DAP), a precursor of L-lysine and an essential component of the bacterial peptidoglycan. This Streptomyces coelicolor (strain ATCC BAA-471 / A3(2) / M145) protein is Diaminopimelate epimerase.